Here is a 503-residue protein sequence, read N- to C-terminus: Interferon regulatory factor 7 (503 aa).

Positions 11–126 (RVLFGEWLLG…DPHKVYALSR (116 aa)) form a DNA-binding region, IRF tryptophan pentad repeat. A disordered region spans residues 69 to 88 (RWPPSSRGGGPPPEAETAER). The residue at position 92 (Lys92) is an N6-acetyllysine; by KAT2A and KAT2B. Disordered stretches follow at residues 133-156 (GPGT…GPPG) and 242-277 (TTPS…SPSA). Residues 146–156 (AVPPPQGGPPG) are compositionally biased toward pro residues. The interval 284-456 (PSPGALDVTI…SLVLVKLEPW (173 aa)) is necessary for the interaction with NMI. A Glycyl lysine isopeptide (Lys-Gly) (interchain with G-Cter in ubiquitin) cross-link involves residue Lys375. Glycyl lysine isopeptide (Lys-Gly) (interchain with G-Cter in SUMO) cross-links involve residues Lys444 and Lys446. Ser471, Ser472, and Ser475 each carry phosphoserine. Ser477 and Ser479 each carry phosphoserine; by TBK1 and IKKE. 3 positions are modified to phosphoserine: Ser483, Ser484, and Ser487.

Belongs to the IRF family. As to quaternary structure, monomer. Homodimer; phosphorylation-induced. Heterodimer with IRF3. Interacts with TICAM1 and TICAM2. Interacts with MYD88 and TRAF6. Interacts with TRIM35. Interacts with NMI; the interaction is direct and leads to the inhibition of IRF7-mediated type I IFN production. Interacts with GBP4; preventing interaction between TRAF6 and IRF7, resulting in impaired TRAF6-mediated IRF7 ubiquitination. In terms of assembly, (Microbial infection) Interacts with Epstein-Barr virus LF2 and LMP1. (Microbial infection) Interacts with rotavirus A NSP1; this interaction leads to the proteasome-dependent degradation of IRF7. As to quaternary structure, (Microbial infection) Interacts with human herpes virus 8/HHV-8 proteins ORF45 and vIRF-1. In terms of assembly, (Microbial infection) Interacts with human T-cell leukemia virus 1/HTLV-1 protein HBZ. (Microbial infection) Interacts with Seneca Valley virus protease 3C; this interaction is involved in the suppression of IRF7 expression and phosphorylation by the virus. As to quaternary structure, (Microbial infection) Interacts with ebolavirus VP35; this interaction mediates the sumoylation of IRF7 and contributes to the viral inhibition of IFN-type I production. In terms of assembly, (Microbial infection) Interacts with severe fever with thrombocytopenia syndrome virus (SFTSV) NSs; this interaction sequesters IRF7 in NSs-induced cytoplasmic inclusion bodies. (Microbial infection) Interacts with herpes virus 8/HHV-8 protein vIRF-4; this interaction prevents IRF7 dimerization and subsequent activation. As to quaternary structure, (Microbial infection) Interacts with human metapneumovirus protein M2-2; this interaction prevents IRF7 phosphorlyation and subsequent TLR7/9-dependent IFN-alpha induction. Acetylation inhibits its DNA-binding ability and activity. Post-translationally, in response to a viral infection, phosphorylated on Ser-477 and Ser-479 by TBK1 and IKBKE1. Phosphorylation, and subsequent activation is inhibited by vaccinia virus protein E3. In TLR7- and TLR9-mediated signaling pathway, phosphorylated by IRAK1. In terms of processing, TRAF6-mediated ubiquitination is required for IRF7 activation. TRIM35 mediates IRF7 'Lys-48'-linked polyubiquitination and subsequent proteasomal degradation. Ubiquitinated by UBE3C, leading to its degradation. Sumoylated by TRIM28, which inhibits its transactivation activity. Post-translationally, (Microbial infection) Cleaved and inactivated by the protease 3C of enterovirus 71 allowing the virus to disrupt the host type I interferon production. In terms of processing, (Microbial infection) Cleaved and inactivated by the protease 3C of human enterovirus 68D (EV68) allowing the virus to disrupt the host type I interferon production. 'Lys-48'-linked polyubiquitination and subsequent proteasomal degradation is NMI-dependent in response to Sendai virus infection. Post-translationally, 'Lys-63'-linked ubiquitination by NEURL3 promotes IRF7 activation. As to expression, expressed predominantly in spleen, thymus and peripheral blood leukocytes.

The protein localises to the nucleus. Its subcellular location is the cytoplasm. In the absence of viral infection, maintained as a monomer in an autoinhibited state and phosphorylation disrupts this autoinhibition leading to the liberation of the DNA-binding and dimerization activities and its nuclear localization where it can activate type I IFN and ISG genes. Functionally, key transcriptional regulator of type I interferon (IFN)-dependent immune responses and plays a critical role in the innate immune response against DNA and RNA viruses. Regulates the transcription of type I IFN genes (IFN-alpha and IFN-beta) and IFN-stimulated genes (ISG) by binding to an interferon-stimulated response element (ISRE) in their promoters. Can efficiently activate both the IFN-beta (IFNB) and the IFN-alpha (IFNA) genes and mediate their induction via both the virus-activated, MyD88-independent pathway and the TLR-activated, MyD88-dependent pathway. Induces transcription of ubiquitin hydrolase USP25 mRNA in response to lipopolysaccharide (LPS) or viral infection in a type I IFN-dependent manner. Required during both the early and late phases of the IFN gene induction but is more critical for the late than for the early phase. Exists in an inactive form in the cytoplasm of uninfected cells and following viral infection, double-stranded RNA (dsRNA), or toll-like receptor (TLR) signaling, becomes phosphorylated by IKBKE and TBK1 kinases. This induces a conformational change, leading to its dimerization and nuclear localization where along with other coactivators it can activate transcription of the type I IFN and ISG genes. Can also play a role in regulating adaptive immune responses by inducing PSMB9/LMP2 expression, either directly or through induction of IRF1. Binds to the Q promoter (Qp) of EBV nuclear antigen 1 a (EBNA1) and may play a role in the regulation of EBV latency. Can activate distinct gene expression programs in macrophages and regulate the anti-tumor properties of primary macrophages. The protein is Interferon regulatory factor 7 (IRF7) of Homo sapiens (Human).